Here is a 33-residue protein sequence, read N- to C-terminus: Fatty acid-binding protein, intestinal (33 aa).

It belongs to the calycin superfamily. Fatty-acid binding protein (FABP) family. As to expression, intestine.

It localises to the cytoplasm. Its function is as follows. FABPs are thought to play a role in the intracellular transport of long-chain fatty acids and their acyl-CoA esters. The protein is Fatty acid-binding protein, intestinal (fabp2) of Rhamdia sapo (South American catfish).